Reading from the N-terminus, the 196-residue chain is Large ribosomal subunit protein mL66 (196 aa).

Residues 1-34 (MAALKALVSGCGRLLRGLLAGPAATSWSRLPARG) constitute a mitochondrion transit peptide.

It belongs to the bacterial ribosomal protein bS18 family. Mitochondrion-specific ribosomal protein mL66 subfamily. Component of the mitochondrial large ribosomal subunit (mt-LSU). Mature mammalian 55S mitochondrial ribosomes consist of a small (28S) and a large (39S) subunit. The 28S small subunit contains a 12S ribosomal RNA (12S mt-rRNA) and 30 different proteins. The 39S large subunit contains a 16S rRNA (16S mt-rRNA), a copy of mitochondrial valine transfer RNA (mt-tRNA(Val)), which plays an integral structural role, and 52 different proteins. mL66 forms a zinc-binding site with uL10m.

It is found in the mitochondrion. In Homo sapiens (Human), this protein is Large ribosomal subunit protein mL66 (MRPS18A).